A 303-amino-acid polypeptide reads, in one-letter code: Serine/threonine-protein phosphatase PP-X homolog 2 (303 aa).

Mn(2+) contacts are provided by Asp51, His53, Asp79, and Asn111. The active-site Proton donor is the His112. Residues His161 and His235 each contribute to the Mn(2+) site.

Belongs to the PPP phosphatase family. PP-4 (PP-X) subfamily. Requires Mn(2+) as cofactor.

It catalyses the reaction O-phospho-L-seryl-[protein] + H2O = L-seryl-[protein] + phosphate. The catalysed reaction is O-phospho-L-threonyl-[protein] + H2O = L-threonyl-[protein] + phosphate. This Paramecium tetraurelia protein is Serine/threonine-protein phosphatase PP-X homolog 2 (Ppx2).